Here is a 283-residue protein sequence, read N- to C-terminus: Protein FAM170B (283 aa).

Basic and acidic residues predominate over residues M1–E11. Disordered stretches follow at residues M1–G58 and A246–Q283.

This sequence belongs to the FAM170 family. Interacts with GOPC. Exclusively expressed in adult testis.

It localises to the cytoplasmic vesicle. Its subcellular location is the secretory vesicle. The protein localises to the acrosome. It is found in the acrosome outer membrane. In terms of biological role, plays a role in fertilization through the acrosome reaction. This is Protein FAM170B from Homo sapiens (Human).